Here is a 263-residue protein sequence, read N- to C-terminus: Polyglutamine-binding protein 1 (263 aa).

The WW domain occupies 46-80; it reads EGLPPSWYKVFDPSCGLPYYWNVETDLVSWLSPHD. The tract at residues 94–263 is disordered; the sequence is NSNADAEDKS…AEASRSKQQD (170 aa). Over residues 99–173 the composition is skewed to basic and acidic residues; that stretch reads AEDKSERNLE…DKADREDGKD (75 aa). The stretch at 104 to 110 is one 1-1; approximate repeat; the sequence is ERNLEKV. A 5 X 7 AA approximate tandem repeats of D-R-[NS]-H-E-K-S region spans residues 104-138; the sequence is ERNLEKVDRNHEKSDRSHEKPDRSHEKADRNHEKS. The 1-2 repeat unit spans residues 111–117; that stretch reads DRNHEKS. A 1-3; approximate repeat occupies 118–124; sequence DRSHEKP. The stretch at 125-131 is one 1-4; approximate repeat; sequence DRSHEKA. 10 consecutive repeat copies span residues 132–138, 139–140, 141–142, 143–144, 150–151, 152–153, 154–155, 156–157, 158–159, and 160–161. Residues 139 to 144 are 3 X 2 AA tandem repeats of [DE]-R; that stretch reads DRERER. The 6 X 2 AA tandem repeats of [DE]-R stretch occupies residues 150–161; the sequence is DRERDRDRERER. Residues 243–253 form an important for interaction with TXNL4A region; the sequence is YPSPGAVLRAN. Ser-245 bears the Phosphoserine mark.

As to quaternary structure, interacts with POU3F2/Brn-2, ATXN1, TXNL4A, HTT and AR. Interaction with ATXN1 correlates positively with the length of the polyglutamine tract. Interacts with RNA polymerase II large subunit in a phosphorylation-dependent manner. Forms a ternary complex with ATXN1 mutant and phosphorylated RNA polymerase II. Interacts (via C-terminus) with TXNL4A and CD2BP2. Interacts (via WW domain) with ATN1 and SF3B1, and may interact with additional splice factors. Interacts (via WW domain) with WBP11; Leading to reduce interaction between PQBP1 and TXNL4A. Interacts with CAPRIN1. Interacts with DDX1. Interacts with SFPQ. Interacts with KHSRP.

It is found in the nucleus. Its subcellular location is the nucleus speckle. The protein localises to the cytoplasmic granule. Intrinsically disordered protein that acts as a scaffold, and which is involved in different processes, such as pre-mRNA splicing, transcription regulation, innate immunity and neuron development. Interacts with splicing-related factors via the intrinsically disordered region and regulates alternative splicing of target pre-mRNA species. May suppress the ability of POU3F2 to transactivate the DRD1 gene in a POU3F2 dependent manner. Can activate transcription directly or via association with the transcription machinery. May be involved in ATXN1 mutant-induced cell death. The interaction with ATXN1 mutant reduces levels of phosphorylated RNA polymerase II large subunit. Involved in the assembly of cytoplasmic stress granule, possibly by participating in the transport of neuronal RNA granules. Also acts as an innate immune sensor of infection by retroviruses, by detecting the presence of reverse-transcribed DNA in the cytosol. Directly binds retroviral reverse-transcribed DNA in the cytosol and interacts with CGAS, leading to activate the cGAS-STING signaling pathway, triggering type-I interferon production. The chain is Polyglutamine-binding protein 1 (Pqbp1) from Rattus norvegicus (Rat).